A 700-amino-acid polypeptide reads, in one-letter code: Ribonucleoside-diphosphate reductase subunit alpha (700 aa).

Residues threonine 153, 169–170, glycine 198, 380–384, and 580–584 contribute to the substrate site; these read SC, NLCSE, and PTGSI. The cysteines at positions 170 and 409 are disulfide-linked. The Proton acceptor role is filled by asparagine 380. The active-site Cysteine radical intermediate is cysteine 382. Glutamate 384 acts as the Proton acceptor in catalysis.

The protein belongs to the ribonucleoside diphosphate reductase large chain family. As to quaternary structure, tetramer of two alpha and two beta subunits.

The enzyme catalyses a 2'-deoxyribonucleoside 5'-diphosphate + [thioredoxin]-disulfide + H2O = a ribonucleoside 5'-diphosphate + [thioredoxin]-dithiol. Its activity is regulated as follows. Under complex allosteric control mediated by deoxynucleoside triphosphates and ATP binding. The type of nucleotide bound at the specificity site determines substrate preference. It seems probable that ATP makes the enzyme reduce CDP and UDP, dGTP favors ADP reduction and dTTP favors GDP reduction. Provides the precursors necessary for DNA synthesis. Catalyzes the biosynthesis of deoxyribonucleotides from the corresponding ribonucleotides. The sequence is that of Ribonucleoside-diphosphate reductase subunit alpha from Bacillus subtilis (strain 168).